A 111-amino-acid chain; its full sequence is Ribonuclease P protein component (111 aa).

It belongs to the RnpA family. As to quaternary structure, consists of a catalytic RNA component (M1 or rnpB) and a protein subunit.

The catalysed reaction is Endonucleolytic cleavage of RNA, removing 5'-extranucleotides from tRNA precursor.. In terms of biological role, RNaseP catalyzes the removal of the 5'-leader sequence from pre-tRNA to produce the mature 5'-terminus. It can also cleave other RNA substrates such as 4.5S RNA. The protein component plays an auxiliary but essential role in vivo by binding to the 5'-leader sequence and broadening the substrate specificity of the ribozyme. The polypeptide is Ribonuclease P protein component (Clostridium botulinum (strain Okra / Type B1)).